A 459-amino-acid polypeptide reads, in one-letter code: Sorting nexin-8 (459 aa).

The segment at 1 to 53 is disordered; that stretch reads MTGGAMDPLPTAPGAAAAEAEVDEEADPPAADSPVPPVSEPRAPDAGQMQVPP. One can recognise a PX domain in the interval 68–176; it reads ARDAVQVELV…KLFLSFSGPD (109 aa). 3 residues coordinate a 1,2-diacyl-sn-glycero-3-phospho-(1D-myo-inositol-3-phosphate): Arg-104, Lys-130, and Arg-143.

The protein belongs to the sorting nexin family.

It localises to the early endosome membrane. May be involved in several stages of intracellular trafficking. May play a role in intracellular protein transport from early endosomes to the trans-Golgi network. The sequence is that of Sorting nexin-8 (SNX8) from Bos taurus (Bovine).